Here is a 156-residue protein sequence, read N- to C-terminus: Transcription elongation factor GreA (156 aa).

The stretch at 46–66 (AEYHSAREKQSFIEGRIKELE) forms a coiled coil.

Belongs to the GreA/GreB family.

Necessary for efficient RNA polymerase transcription elongation past template-encoded arresting sites. The arresting sites in DNA have the property of trapping a certain fraction of elongating RNA polymerases that pass through, resulting in locked ternary complexes. Cleavage of the nascent transcript by cleavage factors such as GreA or GreB allows the resumption of elongation from the new 3'terminus. GreA releases sequences of 2 to 3 nucleotides. The polypeptide is Transcription elongation factor GreA (Ruegeria pomeroyi (strain ATCC 700808 / DSM 15171 / DSS-3) (Silicibacter pomeroyi)).